Here is a 370-residue protein sequence, read N- to C-terminus: Tomoregulin-1 (370 aa).

The signal sequence occupies residues 1–36 (MDGLHPASWMLLLGSLAFWSASSLLLFSLALPGARA). Residues 37–320 (SNQLLSECHN…VPSRQKLTHV (284 aa)) are Extracellular-facing. Residue N53 is glycosylated (N-linked (GlcNAc...) asparagine). Kazal-like domains are found at residues 88-135 (ICQF…PCFS) and 179-227 (VCNI…SCIE). Intrachain disulfides connect C89-C119, C93-C112, C101-C133, C180-C211, C184-C204, C193-C225, C265-C278, C273-C289, and C291-C300. The 41-residue stretch at 261–301 (NYIPCSENYNGYCVHGKCELSYSSQKASCRCDSGYTGQYCD) folds into the EGF-like domain. A helical transmembrane segment spans residues 321–341 (LIAAIIGAVQIAIIVAIVMCI). Residues 342–370 (TRKCPKNNRGRRQKQNLGHFSSDTSSRMV) are Cytoplasmic-facing. The segment at 349–370 (NRGRRQKQNLGHFSSDTSSRMV) is disordered. Polar residues predominate over residues 356–370 (QNLGHFSSDTSSRMV).

The protein belongs to the tomoregulin family. As to quaternary structure, interacts with cripto. In terms of tissue distribution, expressed at highest levels in brain, and at lower levels in neuroendocrine tissues. Present in neurons from the diencephalon (at protein level).

Its subcellular location is the cell membrane. In terms of biological role, inhibits nodal/nr-1 and bmp signaling during neural patterning through interaction with cripto. The sequence is that of Tomoregulin-1 (tmeff1) from Xenopus laevis (African clawed frog).